The following is a 157-amino-acid chain: Large ribosomal subunit protein uL11 (157 aa).

The protein belongs to the universal ribosomal protein uL11 family.

In terms of biological role, this protein binds directly to 26S ribosomal RNA. The chain is Large ribosomal subunit protein uL11 (RPL12) from Chlamydomonas reinhardtii (Chlamydomonas smithii).